Reading from the N-terminus, the 106-residue chain is Ferredoxin (106 aa).

[3Fe-4S] cluster contacts are provided by Cys8 and Cys16. [4Fe-4S] cluster is bound by residues Cys20, Cys39, Cys42, and Cys45. The 4Fe-4S ferredoxin-type domain maps to 30–59 (RMLYIHPDECVDCGACEPVCPVEAIYYEDD). Residue Cys49 participates in [3Fe-4S] cluster binding. Residues 81 to 106 (PGGASKVGQTDNDPQAIKDLPPQGED) form a disordered region.

It depends on [4Fe-4S] cluster as a cofactor. [3Fe-4S] cluster is required as a cofactor.

Ferredoxins are iron-sulfur proteins that transfer electrons in a wide variety of metabolic reactions. The protein is Ferredoxin (fdxA) of Mycolicibacterium smegmatis (Mycobacterium smegmatis).